The sequence spans 372 residues: Fatty acid conjugase FAC2 B (372 aa).

The next 2 helical transmembrane spans lie at Y44–I64 and I74–G94. A Histidine box-1 motif is present at residues H95 to H99. A Histidine box-2 motif is present at residues H131–H135. A run of 3 helical transmembrane segments spans residues I166–F186, V217–V237, and A240–A260. Residues H304–H308 carry the Histidine box-3 motif.

Belongs to the fatty acid desaturase type 1 family. Expressed exclusively in the developing seeds. Not detected in leaves.

Its subcellular location is the microsome membrane. It carries out the reaction a (9Z,12Z)-octadecadienoyl-containing glycerolipid + AH2 + O2 = a (8E,10E,12Z)-octadecatrienoyl-containing glycerolipid + A + 2 H2O. It participates in lipid metabolism; polyunsaturated fatty acid biosynthesis. Functionally, fatty acid conjugase converting 18:2(9Z, 12Z) to calendic acid 18:3(8E, 10E, 12Z). Converts alpha-linolenic acid (18:3(9Z, 12Z, 15Z)) into 18:4(8E, 10E, 12Z, 15Z). Also has weak activity on the mono-unsaturates 16:1(9Z) and 18:1(9Z) producing two conjugated double bonds at delta(8) and delta(10) position. The chain is Fatty acid conjugase FAC2 B from Calendula officinalis (Pot marigold).